Reading from the N-terminus, the 413-residue chain is Gamma-glutamyl phosphate reductase (413 aa).

Belongs to the gamma-glutamyl phosphate reductase family.

The protein localises to the cytoplasm. The enzyme catalyses L-glutamate 5-semialdehyde + phosphate + NADP(+) = L-glutamyl 5-phosphate + NADPH + H(+). It participates in amino-acid biosynthesis; L-proline biosynthesis; L-glutamate 5-semialdehyde from L-glutamate: step 2/2. In terms of biological role, catalyzes the NADPH-dependent reduction of L-glutamate 5-phosphate into L-glutamate 5-semialdehyde and phosphate. The product spontaneously undergoes cyclization to form 1-pyrroline-5-carboxylate. In Leuconostoc mesenteroides subsp. mesenteroides (strain ATCC 8293 / DSM 20343 / BCRC 11652 / CCM 1803 / JCM 6124 / NCDO 523 / NBRC 100496 / NCIMB 8023 / NCTC 12954 / NRRL B-1118 / 37Y), this protein is Gamma-glutamyl phosphate reductase.